A 160-amino-acid chain; its full sequence is Ribonuclease H (160 aa).

The RNase H type-1 domain maps to 5 to 146 (PGGLVEIWTD…VDQLATAARE (142 aa)). Mg(2+) contacts are provided by Asp-14, Glu-52, Asp-74, and Asp-138.

It belongs to the RNase H family. In terms of assembly, monomer. It depends on Mg(2+) as a cofactor.

It is found in the cytoplasm. The catalysed reaction is Endonucleolytic cleavage to 5'-phosphomonoester.. Functionally, endonuclease that specifically degrades the RNA of RNA-DNA hybrids. The polypeptide is Ribonuclease H (Acidiphilium cryptum (strain JF-5)).